A 76-amino-acid chain; its full sequence is MEKKIIFLVFLVALLALPGFISTEVIKKDTPYKKRKFPYKSECLKACATSFTGGDESRIQEGKPGFFKCTCYFTTG.

The N-terminal stretch at 1 to 23 is a signal peptide; the sequence is MEKKIIFLVFLVALLALPGFIST. The important for inhibition of KCNQ4 stretch occupies residues 33 to 36; that stretch reads KKRK. Cystine bridges form between Cys-43/Cys-69 and Cys-47/Cys-71.

This sequence belongs to the scoloptoxin-15 family. In terms of tissue distribution, expressed by the venom gland.

It localises to the secreted. In terms of biological role, blocks voltage-gated potassium channels Kv7.4/KCNQ4 (IC(50)=2.5 uM), Kv7.1/KCNQ1 (IC(50)=2.8 uM), Kv7.2/KCNQ2 (IC(50)=2.7 uM) and Kv7.5/KCNQ5 (IC(50)=2.7 uM). Targets the pore domain, in particular negatively charged residues 'Asp-266' and 'Asp-288', of KCNQ4 and probably other KCNQ channel family members where these residues are conserved. In vivo, shows vasoconstrictive activity resulting in acute hypertension when injected intravenously in mice. Also induces coronary vasospasms ultimately leading to heart failure. Induces seizures when injected into the hippocampus of mice. Decreases respiratory rate while increasing respiratory amplitude, probably by triggering a contraction of the bronchial ring. This chain is Mu-scoloptoxin(15)-Ssm1a, found in Scolopendra mutilans (Chinese red-headed centipede).